Consider the following 621-residue polypeptide: Microbial serine proteinase (621 aa).

The signal sequence occupies residues 1-24; it reads MRKTSLALAISALLSALPIASVQA. Residues 68-440 form the Peptidase S8 domain; that stretch reads PRGGMAGNDL…FGLVDVNKTQ (373 aa). Asp98 functions as the Charge relay system in the catalytic mechanism. Residues 114-133 form a disordered region; sequence PGSKNVVTGGSDPTPTDPDR. Active-site charge relay system residues include His137 and Ser354. Positions 454–619 constitute a P/Homo B domain; it reads AVALAKGKGN…GYSVLGHDAA (166 aa). Residues 457-485 are disordered; that stretch reads LAKGKGNGRSPSAPSRYVGSSPTRSSTQV. Polar residues predominate over residues 465–485; that stretch reads RSPSAPSRYVGSSPTRSSTQV.

It belongs to the peptidase S8 family.

Functionally, agent of furonculosis. This chain is Microbial serine proteinase (aspA), found in Aeromonas salmonicida.